The chain runs to 394 residues: Elongation factor Tu (394 aa).

Positions 10–204 (KPHINVGTIG…ALDKYIPEPQ (195 aa)) constitute a tr-type G domain. The segment at 19–26 (GHVDHGKT) is G1. 19–26 (GHVDHGKT) is a GTP binding site. Threonine 26 lines the Mg(2+) pocket. The G2 stretch occupies residues 60–64 (GITIN). Positions 81–84 (DCPG) are G3. GTP is bound by residues 81–85 (DCPGH) and 136–139 (NKCD). Positions 136–139 (NKCD) are G4. A G5 region spans residues 174–176 (SAL).

The protein belongs to the TRAFAC class translation factor GTPase superfamily. Classic translation factor GTPase family. EF-Tu/EF-1A subfamily. As to quaternary structure, monomer.

The protein resides in the cytoplasm. It carries out the reaction GTP + H2O = GDP + phosphate + H(+). Functionally, GTP hydrolase that promotes the GTP-dependent binding of aminoacyl-tRNA to the A-site of ribosomes during protein biosynthesis. In Hamiltonella defensa subsp. Acyrthosiphon pisum (strain 5AT), this protein is Elongation factor Tu.